A 719-amino-acid polypeptide reads, in one-letter code: Polyphosphate kinase (719 aa).

ATP is bound at residue asparagine 54. Mg(2+) contacts are provided by arginine 379 and arginine 409. In terms of domain architecture, PLD phosphodiesterase spans 434-468; it reads THLKTHSKIALVVKRMNNKLTSFIHLGTGNYNDKT. The Phosphohistidine intermediate role is filled by histidine 439. Residues tyrosine 472, arginine 568, and histidine 596 each contribute to the ATP site.

This sequence belongs to the polyphosphate kinase 1 (PPK1) family. Requires Mg(2+) as cofactor. In terms of processing, an intermediate of this reaction is the autophosphorylated ppk in which a phosphate is covalently linked to a histidine residue through a N-P bond.

The catalysed reaction is [phosphate](n) + ATP = [phosphate](n+1) + ADP. Catalyzes the reversible transfer of the terminal phosphate of ATP to form a long-chain polyphosphate (polyP). The polypeptide is Polyphosphate kinase (Staphylococcus saprophyticus subsp. saprophyticus (strain ATCC 15305 / DSM 20229 / NCIMB 8711 / NCTC 7292 / S-41)).